A 500-amino-acid polypeptide reads, in one-letter code: FAD-linked oxidoreductase chyH (500 aa).

The signal sequence occupies residues 1 to 20 (MRLQAVTAVAAWAVASACQS). The region spanning 65 to 235 (LEVPTVNIVI…TSVTSKTYDI (171 aa)) is the FAD-binding PCMH-type domain. N-linked (GlcNAc...) asparagine glycans are attached at residues Asn-199, Asn-266, Asn-275, and Asn-383.

It belongs to the oxygen-dependent FAD-linked oxidoreductase family. FAD serves as cofactor.

It participates in pigment biosynthesis. In terms of biological role, FAD-linked oxidoreductase; part of the gene cluster that mediates the biosynthesis of the yellow pigment chrysogine. the NRPS chyA mediates the condensation of anthranilic acid and alanine into the intermediate 2-(2-aminopropanamido)benzoic acid. The remainder of the pathway is highly branched yielding at least 13 chrysogine-related compounds. The malonyl transferase chyE converts 2-(2-aminopropanamido)benzoic acid and 2-(2-aminopropanamido)benzamidine into 2-(2-(2-carboxyacetamido)propanamido)benzoic acid and 3-((1-((2-carbamoylphenyl)amino)-1-oxopropan-2-yl)amino)-3-oxopropanoic acid, respectively. ChyD is an amidase, being responsible for the amidation of the carboxylic acid moiety of 2-(2-aminopropanamido)benzoic acid, 2-(2-(2-carboxyacetamido)propanamido)benzoic acid and 2-(2-((4-amino-1-carboxy-4-oxobutyl)amino)propanamido)benzoic acid. ChyC is involved in the same reactions as ChyD, but plays a more minor role in the amidation reactions compared to chyD. The oxidoreductases chyH and chyM are involved in oxidation reactions that form N-pyruvoylanthranilamide from 2-(2-aminopropanamido)benzamidine and (1-((2-carbamoylphenyl)amino)-1-oxopropan-2-yl)glutamine, respectively. N-pyruvoylanthranilamide is further converted via two further branches in the pathway, yielding chrysogine and additional chrysogine-related coumpounds. Chrysogine is likely formed by a spontaneous ring closure from N-pyruvoylanthranilamide. In Penicillium rubens (strain ATCC 28089 / DSM 1075 / NRRL 1951 / Wisconsin 54-1255) (Penicillium chrysogenum), this protein is FAD-linked oxidoreductase chyH.